The following is a 109-amino-acid chain: Spermidine export protein MdtI (109 aa).

Transmembrane regions (helical) follow at residues 6–26 (WIHAAWLAVAIVLEIIANVFL), 36–56 (VYGILSLAAVLGAFSALSQAV), 64–84 (AYALWGGFGIAATIAAGWVLF), and 88–108 (LNNKGWAGLILLVAGMVLIKL).

Belongs to the drug/metabolite transporter (DMT) superfamily. Small multidrug resistance (SMR) (TC 2.A.7.1) family. MdtI subfamily. In terms of assembly, forms a complex with MdtJ.

It localises to the cell inner membrane. Catalyzes the excretion of spermidine. This Klebsiella pneumoniae (strain 342) protein is Spermidine export protein MdtI.